Here is a 1088-residue protein sequence, read N- to C-terminus: Methionine S-methyltransferase (1088 aa).

Belongs to the class I-like SAM-binding methyltransferase superfamily. Homotetramer. Expressed in the shoot, scutellum, and aleurone cells but not in the root or endosperm.

It localises to the cytoplasm. The enzyme catalyses L-methionine + S-adenosyl-L-methionine = S-methyl-L-methionine + S-adenosyl-L-homocysteine. Catalyzes the S-methylmethionine (SMM) biosynthesis from adenosyl-L-homocysteine (AdoMet) and methionine. SMM biosynthesis (by MMT1) and degradation (by HMT-1, HMT-2 and HMT-3) constitute the SMM cycle in plants, which is probably required to achieve short term control of AdoMet level. Also able to catalyze the selenium-methylmethionine (SeMM) from AdoMet and selenium-methionine (SeMet). May play a role in phoem sulfur transport; such function is however not essential. The sequence is that of Methionine S-methyltransferase (MMT1) from Hordeum vulgare (Barley).